The sequence spans 300 residues: UDP-N-acetylenolpyruvoylglucosamine reductase (300 aa).

The region spanning 30 to 194 (RVGGPADFFV…IGATFVLDSD (165 aa)) is the FAD-binding PCMH-type domain. Residue Arg-174 is part of the active site. The active-site Proton donor is the Ser-223. The active site involves Glu-293.

The protein belongs to the MurB family. It depends on FAD as a cofactor.

The protein localises to the cytoplasm. It carries out the reaction UDP-N-acetyl-alpha-D-muramate + NADP(+) = UDP-N-acetyl-3-O-(1-carboxyvinyl)-alpha-D-glucosamine + NADPH + H(+). It functions in the pathway cell wall biogenesis; peptidoglycan biosynthesis. In terms of biological role, cell wall formation. The protein is UDP-N-acetylenolpyruvoylglucosamine reductase of Geobacter sulfurreducens (strain ATCC 51573 / DSM 12127 / PCA).